Reading from the N-terminus, the 116-residue chain is Peptidyl-tRNA hydrolase (116 aa).

The protein belongs to the PTH2 family.

It localises to the cytoplasm. It carries out the reaction an N-acyl-L-alpha-aminoacyl-tRNA + H2O = an N-acyl-L-amino acid + a tRNA + H(+). In terms of biological role, the natural substrate for this enzyme may be peptidyl-tRNAs which drop off the ribosome during protein synthesis. This chain is Peptidyl-tRNA hydrolase, found in Methanococcus vannielii (strain ATCC 35089 / DSM 1224 / JCM 13029 / OCM 148 / SB).